The sequence spans 384 residues: MSSVPAPREYFLDSIRAWLMLLGIPFHISLIYSTHSWHVNSATPSWWLTLFNDFIHAFRMQVFFVISGYFSYMLFLRYPLKRWWKVRVERVGIPMLTAIPLLTLPQFILLQYVKEKTENWPTLSAYEKYNTLAWELISHLWFLLVLVILTTVSIGIFTWFQKRQETSKPRPAAISLAKLSLIFFLLGVAYAAIRRIIFIVYPAILSDGMFNFIVMQTLFYVPFFILGALAFIHPDLKARFTTPSRGCTLGAAVAFIAYLLNQRYGSGDAWMYETESVITMVMGLWMVNVVFSLGHRLLNFQSARVTYFVNASLFIYLVHHPLTLFFGAYITPHISSNLIGFLCGLIFVMGIALILYEIHLRIPLLKFLFSGKPPVKQESRAAIG.

A run of 10 helical transmembrane segments spans residues 17–37, 54–74, 91–111, 140–160, 173–193, 212–232, 240–260, 274–294, 311–331, and 338–358; these read AWLMLLGIPFHISLIYSTHSW, FIHAFRMQVFFVISGYFSYML, VGIPMLTAIPLLTLPQFILLQ, LWFLLVLVILTTVSIGIFTWF, AISLAKLSLIFFLLGVAYAAI, FIVMQTLFYVPFFILGALAFI, FTTPSRGCTLGAAVAFIAYLL, TESVITMVMGLWMVNVVFSLG, ASLFIYLVHHPLTLFFGAYIT, and LIGFLCGLIFVMGIALILYEI.

The protein belongs to the acyltransferase 3 family. OpgC subfamily.

The protein localises to the cell membrane. The protein operates within glycan metabolism; osmoregulated periplasmic glucan (OPG) biosynthesis. In terms of biological role, necessary for the succinyl substitution of periplasmic glucans. Could catalyze the transfer of succinyl residues from the cytoplasmic side of the membrane to the nascent glucan backbones on the periplasmic side of the membrane. This is Glucans biosynthesis protein C from Salmonella heidelberg (strain SL476).